Here is a 79-residue protein sequence, read N- to C-terminus: Small ribosomal subunit protein bS18 (79 aa).

Belongs to the bacterial ribosomal protein bS18 family. As to quaternary structure, part of the 30S ribosomal subunit. Forms a tight heterodimer with protein bS6.

Binds as a heterodimer with protein bS6 to the central domain of the 16S rRNA, where it helps stabilize the platform of the 30S subunit. The chain is Small ribosomal subunit protein bS18 from Salinispora arenicola (strain CNS-205).